A 132-amino-acid chain; its full sequence is Insulin-like 3 (132 aa).

Positions 1–24 are cleaved as a signal peptide; that stretch reads MSPRPLAWALVLLGAALAVALALG. 3 cysteine pairs are disulfide-bonded: C36/C117, C48/C130, and C116/C121. A propeptide spans 61–104 (c peptide like); it reads VAGGDRELLQWLEGRHLHGQVSDGDPMLVLVPQALPQASLHHHH.

The protein belongs to the insulin family. As to quaternary structure, heterodimer of a B chain and an A chain linked by two disulfide bonds. In terms of tissue distribution, more strongly expressed in testis than in ovary.

The protein localises to the secreted. Its function is as follows. Seems to play a role in testicular function. May be a trophic hormone with a role in testicular descent in fetal life. Is a ligand for LGR8 receptor. This chain is Insulin-like 3 (INSL3), found in Canis lupus familiaris (Dog).